Here is a 365-residue protein sequence, read N- to C-terminus: tRNA/tmRNA (uracil-C(5))-methyltransferase (365 aa).

S-adenosyl-L-methionine-binding residues include Gln189, Tyr217, Asn222, Glu238, and Asp298. Residue Cys323 is the Nucleophile of the active site. The active-site Proton acceptor is Glu357.

The protein belongs to the class I-like SAM-binding methyltransferase superfamily. RNA M5U methyltransferase family. TrmA subfamily.

The catalysed reaction is uridine(54) in tRNA + S-adenosyl-L-methionine = 5-methyluridine(54) in tRNA + S-adenosyl-L-homocysteine + H(+). The enzyme catalyses uridine(341) in tmRNA + S-adenosyl-L-methionine = 5-methyluridine(341) in tmRNA + S-adenosyl-L-homocysteine + H(+). In terms of biological role, dual-specificity methyltransferase that catalyzes the formation of 5-methyluridine at position 54 (m5U54) in all tRNAs, and that of position 341 (m5U341) in tmRNA (transfer-mRNA). The polypeptide is tRNA/tmRNA (uracil-C(5))-methyltransferase (Proteus mirabilis (strain HI4320)).